Consider the following 757-residue polypeptide: Ecdysone receptor (757 aa).

The tract at residues 1-300 (MMKRRWSNNG…GPAPRLQEEL (300 aa)) is modulating. Disordered stretches follow at residues 126–192 (NSVG…GGGG) and 235–289 (LNHH…KKIK). Positions 128–138 (VGGGGGGGGVP) are enriched in gly residues. Residues 167 to 183 (NSNSNHSNSSSHHTNGH) show a composition bias toward low complexity. NR C4-type zinc fingers lie at residues 301 to 321 (CLVC…CEGC) and 337 to 361 (CKFG…LKKC). The nuclear receptor DNA-binding region spans 301–373 (CLVCGDRASG…VGMRPECVVP (73 aa)). An NR LBD domain is found at 442-677 (NQLAVIYKLI…FLEEIWDVHA (236 aa)). Positions 717 to 734 (TSMATSSSSSLSPSAAST) are enriched in low complexity. The interval 717-739 (TSMATSSSSSLSPSAASTPNGGA) is disordered.

Belongs to the nuclear hormone receptor family. NR1 subfamily.

The protein localises to the nucleus. Receptor for ecdysone. Binds to ecdysone response elements (ECRES). The chain is Ecdysone receptor (EcR) from Lucilia cuprina (Green bottle fly).